The sequence spans 506 residues: Pyruvate kinase 2 (506 aa).

The residue at position 24 (serine 24) is a Phosphoserine. Position 51 (arginine 51) interacts with substrate. Asparagine 53, serine 55, aspartate 86, and threonine 87 together coordinate K(+). ATP is bound at residue 53–56; the sequence is NFSH. Arginine 93 and lysine 179 together coordinate ATP. Residue glutamate 244 participates in Mg(2+) binding. The substrate site is built by glycine 267, aspartate 268, and threonine 300. Aspartate 268 contacts Mg(2+).

It belongs to the pyruvate kinase family. In terms of assembly, homotetramer. It depends on Mg(2+) as a cofactor. Requires K(+) as cofactor.

It carries out the reaction pyruvate + ATP = phosphoenolpyruvate + ADP + H(+). The protein operates within carbohydrate degradation; glycolysis; pyruvate from D-glyceraldehyde 3-phosphate: step 5/5. With respect to regulation, not activated by fructose-1,6-bisphosphate. Its function is as follows. May be used by cells under conditions in which the level of glycolytic flux is very low. The protein is Pyruvate kinase 2 (PYK2) of Saccharomyces cerevisiae (strain ATCC 204508 / S288c) (Baker's yeast).